Consider the following 147-residue polypeptide: UPF0275 protein PM0504 (147 aa).

It belongs to the UPF0275 family.

This chain is UPF0275 protein PM0504, found in Pasteurella multocida (strain Pm70).